Here is a 669-residue protein sequence, read N- to C-terminus: Alpha-1,4-glucan:maltose-1-phosphate maltosyltransferase 2 (669 aa).

The alpha-maltose 1-phosphate site is built by K255, Q315, and D350. Catalysis depends on D385, which acts as the Nucleophile. N386 is an alpha-maltose 1-phosphate binding site. E414 (proton donor) is an active-site residue. 525–526 (KY) is a binding site for alpha-maltose 1-phosphate.

It belongs to the glycosyl hydrolase 13 family. GlgE subfamily. As to quaternary structure, homodimer.

It carries out the reaction alpha-maltose 1-phosphate + [(1-&gt;4)-alpha-D-glucosyl](n) = [(1-&gt;4)-alpha-D-glucosyl](n+2) + phosphate. Functionally, maltosyltransferase that uses maltose 1-phosphate (M1P) as the sugar donor to elongate linear or branched alpha-(1-&gt;4)-glucans. Maltooligosaccharides with a degree of polymerization (DP) superior or equal to 4 are efficient acceptors, with DP6 being optimal in the GlgE-catalyzed polymerization with M1P. Is probably involved in a branched alpha-glucan biosynthetic pathway from trehalose, together with TreS, Mak and GlgB. This is Alpha-1,4-glucan:maltose-1-phosphate maltosyltransferase 2 (glgE2) from Streptomyces coelicolor (strain ATCC BAA-471 / A3(2) / M145).